The primary structure comprises 433 residues: Probable phosphoglucosamine mutase (433 aa).

The Phosphoserine intermediate role is filled by S91. Mg(2+)-binding residues include S91, D229, D231, and D233. S91 bears the Phosphoserine mark.

The protein belongs to the phosphohexose mutase family. Mg(2+) serves as cofactor. Activated by phosphorylation.

The catalysed reaction is alpha-D-glucosamine 1-phosphate = D-glucosamine 6-phosphate. Functionally, catalyzes the conversion of glucosamine-6-phosphate to glucosamine-1-phosphate. The protein is Probable phosphoglucosamine mutase of Methanococcoides burtonii (strain DSM 6242 / NBRC 107633 / OCM 468 / ACE-M).